A 476-amino-acid chain; its full sequence is MKVRVRLAPSPTGTLHIGTARTAVFNWLFARHQGGEFLVRIEDTDKERSKPEFTTNILEGLKWLGLNWDEQPIIQSQHVDDHRAAIQKLLDLDLAYRCYASETELEAMRETQKAQGQAPRYDNRHRNLNPEQEAAFQSEGRSAVVRFRIDDVAAISWKDLVRGPMHWRGSDLGGDMVISRRAPAKEIGDPLYNLVVVVDDAAMSISHVIRGEDHIANTAKQLLIYEALGLPIPQFAHTPLILNSEGRKLSKRDGVTSISDFQAMGYTAEAMANYMTLLGWSVPEGTDERFTLQQAATVFSFDRVNKAGAKFDWDKLNWLNSQVLHDLPKDQLLHELKPLWSEAGWALPEENWCLDLAELLGPSLTLLKDGVDQARPFFEEPTLQADGLEQLAMEGAKAGLSNLLDQLDSTSWDGFDVKQAQQLLTNAAQAANVKKGVIMKSLRAALLGRLQGPDLITTWGLLARIGQDLNRLRRCL.

Residues 9-19 (PSPTGTLHIGT) carry the 'HIGH' region motif. The 'KMSKS' region signature appears at 248-252 (KLSKR). Lys-251 contacts ATP.

Belongs to the class-I aminoacyl-tRNA synthetase family. Glutamate--tRNA ligase type 1 subfamily. In terms of assembly, monomer.

It is found in the cytoplasm. It carries out the reaction tRNA(Glu) + L-glutamate + ATP = L-glutamyl-tRNA(Glu) + AMP + diphosphate. Catalyzes the attachment of glutamate to tRNA(Glu) in a two-step reaction: glutamate is first activated by ATP to form Glu-AMP and then transferred to the acceptor end of tRNA(Glu). The protein is Glutamate--tRNA ligase of Prochlorococcus marinus (strain MIT 9303).